Consider the following 340-residue polypeptide: MLSGIGGQAARAAALWLTPEPAQHGTPTPTHPHSHAPPLPRTPTPSHPHSRAPPLPRAPTPTHPHSHAPPLPRTPEIHPTQTGKRYKSKPLFPNRQQKSPEFFIRANTKDPLVCGARVFHFSPPRHGLAGVVGAARDHPAPDPPLPTNTGGVPYCFPSSRVDAPCSPDHGCRDRRLRKSRAPTRVPWSNSMFPTGVIQRLFHSDAGAVGYSGGITWLPAVSGSRVRRLQPGTAARSRVAMFPVWSTRTTLRVARLPGTLPRPPRPRSSAGAEGGFLLSPSQGTDGPARGGGSGGGRGPGGGRGGPRGSRGRGGRGRGGRGGGRRGRQGGPGPTLAAPPRP.

Disordered regions lie at residues 13 to 96 (AALW…PNRQ) and 254 to 340 (RLPG…PPRP). Tandem repeats lie at residues 27–43 (PTPT…PRTP) and 59–75 (PTPT…PRTP). Positions 27-75 (PTPTHPHSHAPPLPRTPTPSHPHSRAPPLPRAPTPTHPHSHAPPLPRTP) are 2 X 17 AA repeats. Positions 35–73 (HAPPLPRTPTPSHPHSRAPPLPRAPTPTHPHSHAPPLPR) are enriched in pro residues. Over residues 287-307 (ARGGGSGGGRGPGGGRGGPRG) the composition is skewed to gly residues. Basic residues predominate over residues 308 to 326 (SRGRGGRGRGGRGGGRRGR).

The protein is Latency-related protein 1 of Human herpesvirus 1 (strain F) (HHV-1).